The following is an 86-amino-acid chain: Large ribosomal subunit protein bL27 (86 aa).

Over residues 1–10 (MAQKKGGGST) the composition is skewed to gly residues. The tract at residues 1–21 (MAQKKGGGSTRNGRDSESKRL) is disordered.

This sequence belongs to the bacterial ribosomal protein bL27 family.

The chain is Large ribosomal subunit protein bL27 from Ralstonia pickettii (strain 12J).